Consider the following 149-residue polypeptide: Nucleoside diphosphate kinase (149 aa).

6 residues coordinate ATP: Lys-9, Phe-57, Arg-85, Thr-91, Arg-102, and Asn-112. The active-site Pros-phosphohistidine intermediate is the His-115.

It belongs to the NDK family. As to quaternary structure, homotetramer. It depends on Mg(2+) as a cofactor.

The protein localises to the cytoplasm. The enzyme catalyses a 2'-deoxyribonucleoside 5'-diphosphate + ATP = a 2'-deoxyribonucleoside 5'-triphosphate + ADP. The catalysed reaction is a ribonucleoside 5'-diphosphate + ATP = a ribonucleoside 5'-triphosphate + ADP. Its function is as follows. Major role in the synthesis of nucleoside triphosphates other than ATP. The ATP gamma phosphate is transferred to the NDP beta phosphate via a ping-pong mechanism, using a phosphorylated active-site intermediate. This chain is Nucleoside diphosphate kinase, found in Gloeobacter violaceus (strain ATCC 29082 / PCC 7421).